The chain runs to 262 residues: ATP synthase subunit a (262 aa).

6 helical membrane-spanning segments follow: residues Thr50–Lys70, Met107–Ile127, Phe141–Val161, Leu194–Ile214, Val218–Val238, and Gln239–Ala259.

This sequence belongs to the ATPase A chain family. In terms of assembly, F-type ATPases have 2 components, CF(1) - the catalytic core - and CF(0) - the membrane proton channel. CF(1) has five subunits: alpha(3), beta(3), gamma(1), delta(1), epsilon(1). CF(0) has three main subunits: a(1), b(2) and c(9-12). The alpha and beta chains form an alternating ring which encloses part of the gamma chain. CF(1) is attached to CF(0) by a central stalk formed by the gamma and epsilon chains, while a peripheral stalk is formed by the delta and b chains.

The protein resides in the cell membrane. Functionally, key component of the proton channel; it plays a direct role in the translocation of protons across the membrane. This is ATP synthase subunit a from Desulforamulus reducens (strain ATCC BAA-1160 / DSM 100696 / MI-1) (Desulfotomaculum reducens).